Reading from the N-terminus, the 566-residue chain is Arginine--tRNA ligase (566 aa).

The short motif at 120 to 130 (PNIAKPFHVGH) is the 'HIGH' region element.

This sequence belongs to the class-I aminoacyl-tRNA synthetase family. In terms of assembly, monomer.

The protein resides in the cytoplasm. It catalyses the reaction tRNA(Arg) + L-arginine + ATP = L-arginyl-tRNA(Arg) + AMP + diphosphate. This is Arginine--tRNA ligase from Clostridium kluyveri (strain NBRC 12016).